We begin with the raw amino-acid sequence, 377 residues long: MSESKIDNRLWSSKARNLSPYVPGEQPQHDDLCKLNTNENPFPPSPKVGEAITKVLAQQADDLRLYPAPESEELRGALAALYNLDINQVFVGNGSDEVLALVFASFFLKNRPVLAPDISYSFYPVYANTFGIELVQIPLEADFSISPDAYRRPCSGIIIANPNAPTGLLLSLADIRKLAGEHSDSVIVIDEAYIDFAQLEEASAESQMSAISLINEFDNLLVTQTFSKSRSLAGLRVGMAFGNASLIEALTRMKNSFNSYPLDKLAQAGATASVLDVEYFEQTCQQVIDLRTSLTAELTALGYDVLPSHANFVFARPHDGAASQVAEVLREQGIIVRHFDKPRINEYLRITIGTPSQHERLINALKALQAVADVEAS.

Residues 17 to 44 (NLSPYVPGEQPQHDDLCKLNTNENPFPP) form a disordered region. An N6-(pyridoxal phosphate)lysine modification is found at lysine 228.

Belongs to the class-II pyridoxal-phosphate-dependent aminotransferase family. Histidinol-phosphate aminotransferase subfamily. In terms of assembly, homodimer. Requires pyridoxal 5'-phosphate as cofactor.

It catalyses the reaction L-histidinol phosphate + 2-oxoglutarate = 3-(imidazol-4-yl)-2-oxopropyl phosphate + L-glutamate. Its pathway is amino-acid biosynthesis; L-histidine biosynthesis; L-histidine from 5-phospho-alpha-D-ribose 1-diphosphate: step 7/9. The polypeptide is Histidinol-phosphate aminotransferase 2 (Psychrobacter arcticus (strain DSM 17307 / VKM B-2377 / 273-4)).